A 429-amino-acid polypeptide reads, in one-letter code: Na(+)/H(+) antiporter NhaA 1 (429 aa).

Helical transmembrane passes span 32–52 (ISGG…NSPW), 73–93 (LSVQ…VAGL), 111–131 (VVPV…YSLL), 140–160 (GWAI…AVVG), 170–190 (FLLT…AVAY), 193–213 (ELSV…TLLV), 219–239 (AWWL…ASGV), 243–263 (VAGV…AGGP), 284–304 (VAVP…LGGL), 316–336 (VVVG…WLVA), 349–369 (WVDV…SLLI), and 383–403 (HVKV…TVVL).

Belongs to the NhaA Na(+)/H(+) (TC 2.A.33) antiporter family.

It is found in the cell membrane. The catalysed reaction is Na(+)(in) + 2 H(+)(out) = Na(+)(out) + 2 H(+)(in). In terms of biological role, na(+)/H(+) antiporter that extrudes sodium in exchange for external protons. This Frankia alni (strain DSM 45986 / CECT 9034 / ACN14a) protein is Na(+)/H(+) antiporter NhaA 1.